The primary structure comprises 290 residues: Chloride intracellular channel exc-4 (290 aa).

The helical transmembrane segment at L37–V57 threads the bilayer.

The protein belongs to the chloride channel CLIC family. In terms of assembly, monomer. In terms of tissue distribution, expressed in the secretory system, hypodermis, vulva, pharyngeal muscle, rectal gland, tubular rectal epithelium cells, and tubular neuronal support cells in the head and tail.

It is found in the cytoplasm. The protein localises to the membrane. In terms of biological role, may insert into membranes and form chloride ion channels. Involved in the formation of the excretory canal. Required to prevent cystic lumenal expansions in the excretory cell. Not required for formation of the initial tube, but is required for regulating the size of the tube lumen as it grows. The chain is Chloride intracellular channel exc-4 (exc-4) from Caenorhabditis elegans.